The primary structure comprises 550 residues: O-phosphoserine--tRNA(Cys) ligase (550 aa).

Residues 1 to 32 (MRFNPQDWKEKSHTNFEGAWHDGPSVITPPGE) form a disordered region. Substrate is bound by residues 212–214 (HMT), 257–259 (SAS), 299–300 (YY), and Asn342.

This sequence belongs to the class-II aminoacyl-tRNA synthetase family. O-phosphoseryl-tRNA(Cys) synthetase subfamily. Homotetramer. Interacts with SepCysS.

It catalyses the reaction tRNA(Cys) + O-phospho-L-serine + ATP = O-phospho-L-seryl-tRNA(Cys) + AMP + diphosphate. In terms of biological role, catalyzes the attachment of O-phosphoserine (Sep) to tRNA(Cys). The protein is O-phosphoserine--tRNA(Cys) ligase of Methanoregula boonei (strain DSM 21154 / JCM 14090 / 6A8).